We begin with the raw amino-acid sequence, 139 residues long: Coat protein TP2 (139 aa).

Its subcellular location is the virion. The polypeptide is Coat protein TP2 (Thermoproteus tenax virus 1 (strain KRA1) (TTV1)).